Consider the following 148-residue polypeptide: Protein GLUTAMINE DUMPER 3 (148 aa).

The tract at residues 1–24 (MEGRQYYPPRENVEGNRTTMGGGP) is disordered. Residues 1 to 34 (MEGRQYYPPRENVEGNRTTMGGGPHSPWHSPVPY) are Extracellular-facing. Residues 35–55 (LFGGLAAMLGLIAFALLILAC) form a helical membrane-spanning segment. Over 56–148 (SYWRLSGYLD…RSSESNGETH (93 aa)) the chain is Cytoplasmic. Residues 99–103 (VIMAG) carry the VIMAG motif. A compositionally biased stretch (acidic residues) spans 120–132 (CDDDDDEDDDVEG). The interval 120 to 148 (CDDDDDEDDDVEGSDQVVPRSSESNGETH) is disordered. Polar residues predominate over residues 138–148 (PRSSESNGETH).

It belongs to the GLUTAMINE DUMPER 1 (TC 9.B.60) family. Expressed in the vascular tissues. Also detected in anthers.

The protein resides in the membrane. In terms of biological role, probable subunit of an amino acid transporter involved in the regulation of the amino acid metabolism. Stimulates amino acid export by activating nonselective amino acid facilitators. Acts upstream genes involved in the salicylic acid (SA) pathway and in the geminivirus-host interaction. The sequence is that of Protein GLUTAMINE DUMPER 3 (GDU3) from Arabidopsis thaliana (Mouse-ear cress).